Here is a 524-residue protein sequence, read N- to C-terminus: Na(+)/H(+) antiporter NhaB (524 aa).

9 helical membrane passes run 13 to 33 (FLGN…IINP), 98 to 118 (LLLV…LFVF), 140 to 160 (AFLS…SVSV), 239 to 259 (FFIR…LVCL), 304 to 324 (AIIG…VGLV), 325 to 345 (GLSV…HSLG), 358 to 378 (LTVF…TPII), 448 to 468 (ATPN…APLI), and 479 to 499 (ALPY…FLLV).

Belongs to the NhaB Na(+)/H(+) (TC 2.A.34) antiporter family.

It localises to the cell inner membrane. It carries out the reaction 2 Na(+)(in) + 3 H(+)(out) = 2 Na(+)(out) + 3 H(+)(in). Functionally, na(+)/H(+) antiporter that extrudes sodium in exchange for external protons. The protein is Na(+)/H(+) antiporter NhaB of Yersinia pseudotuberculosis serotype I (strain IP32953).